Reading from the N-terminus, the 234-residue chain is 2-C-methyl-D-erythritol 4-phosphate cytidylyltransferase (234 aa).

The protein belongs to the IspD/TarI cytidylyltransferase family. IspD subfamily.

The catalysed reaction is 2-C-methyl-D-erythritol 4-phosphate + CTP + H(+) = 4-CDP-2-C-methyl-D-erythritol + diphosphate. It participates in isoprenoid biosynthesis; isopentenyl diphosphate biosynthesis via DXP pathway; isopentenyl diphosphate from 1-deoxy-D-xylulose 5-phosphate: step 2/6. Its function is as follows. Catalyzes the formation of 4-diphosphocytidyl-2-C-methyl-D-erythritol from CTP and 2-C-methyl-D-erythritol 4-phosphate (MEP). This chain is 2-C-methyl-D-erythritol 4-phosphate cytidylyltransferase, found in Pseudomonas aeruginosa (strain ATCC 15692 / DSM 22644 / CIP 104116 / JCM 14847 / LMG 12228 / 1C / PRS 101 / PAO1).